Here is a 791-residue protein sequence, read N- to C-terminus: Ubiquitin carboxyl-terminal hydrolase 10-A (791 aa).

2 stretches are compositionally biased toward polar residues: residues 118 to 139 and 270 to 284; these read FSES…SGTG and DTTE…QTLE. 2 disordered regions span residues 118–156 and 270–291; these read FSES…YYSY and DTTE…EDTA. The region spanning 408–788 is the USP domain; that stretch reads RGLINKGNWC…TAYLLYYRRV (381 aa). C417 acts as the Nucleophile in catalysis. The disordered stretch occupies residues 560–580; that stretch reads EVNKEEQEGSDEEWEQVGPRN. The active-site Proton acceptor is the H742.

Belongs to the peptidase C19 family. USP10 subfamily.

It is found in the cytoplasm. Its subcellular location is the nucleus. The enzyme catalyses Thiol-dependent hydrolysis of ester, thioester, amide, peptide and isopeptide bonds formed by the C-terminal Gly of ubiquitin (a 76-residue protein attached to proteins as an intracellular targeting signal).. Functionally, hydrolase that can remove conjugated ubiquitin from target proteins such as p53/tp53, rps2/us5, rps3/us3, rps10/eS10, becn1, snx3 and cftr. Acts as an essential regulator of p53/tp53 stability: in unstressed cells, specifically deubiquitinates p53/tp53 in the cytoplasm, leading to counteracts MDM2 action and stabilize p53/tp53. Following DNA damage, translocates to the nucleus and deubiquitinates p53/tp53, leading to regulate the p53/TP53-dependent DNA damage response. Component of a regulatory loop that controls autophagy and p53/tp53 levels. Plays a key role in 40S ribosome subunit recycling when a ribosome has stalled during translation: acts both by inhibiting formation of stress granules, which store stalled translation pre-initiation complexes, and mediating deubiquitination of 40S ribosome subunits. Deubiquitinates cftr in early endosomes, enhancing its endocytic recycling. The chain is Ubiquitin carboxyl-terminal hydrolase 10-A (usp10-a) from Xenopus laevis (African clawed frog).